A 626-amino-acid polypeptide reads, in one-letter code: Solute carrier family 13 member 4 (626 aa).

Transmembrane regions (helical) follow at residues 13 to 33 (LLLV…HPSS), 52 to 72 (AVPL…FGVL), 77 to 97 (VAAE…CVAA), and 113 to 133 (VLMA…CTTL). Over residues 217–228 (SITNPIKTANQH) the composition is skewed to polar residues. A disordered region spans residues 217–252 (SITNPIKTANQHQGKKQHPSQEKPQVLTPSPRKQKL). 8 consecutive transmembrane segments (helical) span residues 274 to 294 (YSAT…LIFL), 309 to 329 (FGTW…VSWF), 372 to 392 (ISYP…LWFT), 414 to 434 (ATVS…KPCF), 466 to 486 (IVIL…SGLS), 499 to 519 (LPPW…TEFV), 543 to 563 (PLYT…LPVG), and 590 to 610 (VIGL…LFHL).

It belongs to the SLC13A/DASS transporter (TC 2.A.47) family. NADC subfamily. In terms of tissue distribution, highly expressed in placenta and testis with intermediate levels in brain and lower levels in heart, thymus and liver.

It localises to the membrane. It carries out the reaction sulfate(out) + 3 Na(+)(out) = sulfate(in) + 3 Na(+)(in). Transport is inhibited by thiosulfate, phosphate, molybdate, selenate and tungstate. Not inhibited by oxalate, citrate, succinate, phenol red or 4,4'-diisothiocyanostilbene-2,2'-disulfonic acid (DIDS). Functionally, sodium:sulfate symporter that mediates sulfate reabsorption in the high endothelial venules (HEV). In Homo sapiens (Human), this protein is Solute carrier family 13 member 4 (SLC13A4).